Here is a 204-residue protein sequence, read N- to C-terminus: Probable nicotinate-nucleotide adenylyltransferase (204 aa).

Belongs to the NadD family.

It carries out the reaction nicotinate beta-D-ribonucleotide + ATP + H(+) = deamido-NAD(+) + diphosphate. The protein operates within cofactor biosynthesis; NAD(+) biosynthesis; deamido-NAD(+) from nicotinate D-ribonucleotide: step 1/1. Its function is as follows. Catalyzes the reversible adenylation of nicotinate mononucleotide (NaMN) to nicotinic acid adenine dinucleotide (NaAD). In Clostridium beijerinckii (strain ATCC 51743 / NCIMB 8052) (Clostridium acetobutylicum), this protein is Probable nicotinate-nucleotide adenylyltransferase.